The following is a 257-amino-acid chain: Putative transcription factor R430 (257 aa).

Disordered stretches follow at residues 1 to 35 and 58 to 77; these read MEKF…DNNS and SLKS…PNKS. Residues 7 to 25 are compositionally biased toward low complexity; sequence TDNTTDNTTDNTTDNTTDN. The segment covering 26–35 has biased composition (basic and acidic residues); it reads TTDKLTDNNS.

Belongs to the nucleo-cytoplasmic large DNA viruses (NCLDVs) VLTF-3 family.

In terms of biological role, putative transcription factor. This is Putative transcription factor R430 from Acanthamoeba polyphaga (Amoeba).